Consider the following 360-residue polypeptide: GDSL esterase/lipase At1g06990 (360 aa).

The first 22 residues, 1–22 (MLIHVIIFMIITTMQFSTTCHA), serve as a signal peptide directing secretion. Residues Asn-26 and Asn-31 are each glycosylated (N-linked (GlcNAc...) asparagine). Ser-44 acts as the Nucleophile in catalysis. N-linked (GlcNAc...) asparagine glycosylation is found at Asn-73, Asn-126, and Asn-272. Catalysis depends on residues Asp-335 and His-338.

This sequence belongs to the 'GDSL' lipolytic enzyme family.

It localises to the secreted. This Arabidopsis thaliana (Mouse-ear cress) protein is GDSL esterase/lipase At1g06990.